The sequence spans 464 residues: Putative protein TIC 214 C-terminal part (464 aa).

It belongs to the TIC214 family. As to quaternary structure, part of the Tic complex.

The protein resides in the plastid. The protein localises to the chloroplast. In terms of biological role, involved in protein precursor import into chloroplasts. May be part of an intermediate translocation complex acting as a protein-conducting channel at the inner envelope. The protein is Putative protein TIC 214 C-terminal part of Marchantia polymorpha (Common liverwort).